We begin with the raw amino-acid sequence, 82 residues long: Pigment-dispersing hormone peptides (82 aa).

Positions 1–26 are cleaved as a signal peptide; the sequence is MIGKYLSWFMLAFLFGFVLESYRVQS. Position 80 is an alanine amide (A80).

The protein belongs to the arthropod PDH family. As to expression, expressed strongly in the head and weakly in the ventral nerve cord. Not detected in the midgut cecum or hindgut. In the cephalic neural complex, specifically localized to cells within the optic lobe, anteromedian protocerebrum, accessory lobe, tritocerebrum, and subesophageal ganglion.

It localises to the secreted. Its function is as follows. The pigment-dispersing hormone causes the migration of the distal retinal pigment into the proximal end of the pigment chromatophore cells and thus decreases the amount of light entering the retinulas. May also function as a neurotransmitter and/or neuromodulator. This is Pigment-dispersing hormone peptides from Armadillidium vulgare (Pillbug).